Here is a 345-residue protein sequence, read N- to C-terminus: Centromere protein L (345 aa).

2 positions are modified to phosphoserine: Ser40 and Ser54.

It belongs to the CENP-L/IML3 family. Component of the CENPA-CAD complex, composed of CENPI, CENPK, CENPL, CENPO, CENPP, CENPQ, CENPR and CENPS. The CENPA-CAD complex interacts with the CENPA-NAC complex, at least composed of CENPA, CENPC, CENPH, CENPM, CENPN, CENPT and CENPU.

The protein resides in the nucleus. Its subcellular location is the chromosome. The protein localises to the centromere. Its function is as follows. Component of the CENPA-CAD (nucleosome distal) complex, a complex recruited to centromeres which is involved in assembly of kinetochore proteins, mitotic progression and chromosome segregation. May be involved in incorporation of newly synthesized CENPA into centromeres via its interaction with the CENPA-NAC complex. This Rattus norvegicus (Rat) protein is Centromere protein L (Cenpl).